A 191-amino-acid polypeptide reads, in one-letter code: Large ribosomal subunit protein bL12cz (191 aa).

Residues 1 to 58 (MASTTLSIATTIRSSSYPTLASINHFPSRTTTIEFPSRFGGGSSSTLTHRATHLRPIA) constitute a chloroplast transit peptide.

The protein belongs to the bacterial ribosomal protein bL12 family.

The protein resides in the plastid. It localises to the chloroplast. The protein is Large ribosomal subunit protein bL12cz (RPL12A) of Arabidopsis thaliana (Mouse-ear cress).